We begin with the raw amino-acid sequence, 209 residues long: Uracil phosphoribosyltransferase (209 aa).

Residues Arg-79, Arg-104, and 131-139 each bind 5-phospho-alpha-D-ribose 1-diphosphate; that span reads DPMLATGNS. Uracil-binding positions include Ile-194 and 199 to 201; that span reads GDA. 5-phospho-alpha-D-ribose 1-diphosphate is bound at residue Asp-200.

This sequence belongs to the UPRTase family. Mg(2+) serves as cofactor.

The catalysed reaction is UMP + diphosphate = 5-phospho-alpha-D-ribose 1-diphosphate + uracil. It participates in pyrimidine metabolism; UMP biosynthesis via salvage pathway; UMP from uracil: step 1/1. With respect to regulation, allosterically activated by GTP. Its function is as follows. Catalyzes the conversion of uracil and 5-phospho-alpha-D-ribose 1-diphosphate (PRPP) to UMP and diphosphate. The sequence is that of Uracil phosphoribosyltransferase from Rhizobium etli (strain CIAT 652).